The chain runs to 690 residues: Ectopic P granules protein 2 (690 aa).

4 coiled-coil regions span residues 20–181, 359–409, 458–494, and 560–643; these read IELA…EREV, ELLR…TIQE, LESG…SLLL, and ATIE…ETKR. The LIR 1 motif lies at 61–64; it reads YSTL. The required for interaction with lgg-1 stretch occupies residues 381-385; the sequence is DFKIL. The segment at 666–690 is disordered; sequence EELDEEPKASTESEEKAEWEMVDEE. A compositionally biased stretch (basic and acidic residues) spans 671–684; that stretch reads EPKASTESEEKAEW. The LIR 2 motif lies at 684 to 687; that stretch reads WEMV.

In terms of assembly, interacts with sepa-1. Interacts (via the LIR motifs) with lgg-1 and lgg-2. Shows strong interaction with lgg-1 and weak interaction with lgg-2.

Its subcellular location is the cytoplasm. Functionally, involved in autophagy. Thought to act as an adapter protein that brings PGL granules to autophagic structures containing lgg-1. Association with other adapters such as sepa-1 is required for the accumulation and degradation of germ cell specific P-granules by autophagy in somatic cells. This ensures exclusive localization of the P-granules in germ cells. May also play a role in the removal of sepa-1 from somatic cells. The protein is Ectopic P granules protein 2 of Caenorhabditis elegans.